A 292-amino-acid chain; its full sequence is Ribosomal RNA small subunit methyltransferase A (292 aa).

The S-adenosyl-L-methionine site is built by asparagine 28, leucine 30, glycine 55, glutamate 76, aspartate 101, and asparagine 126.

This sequence belongs to the class I-like SAM-binding methyltransferase superfamily. rRNA adenine N(6)-methyltransferase family. RsmA subfamily.

The protein resides in the cytoplasm. The catalysed reaction is adenosine(1518)/adenosine(1519) in 16S rRNA + 4 S-adenosyl-L-methionine = N(6)-dimethyladenosine(1518)/N(6)-dimethyladenosine(1519) in 16S rRNA + 4 S-adenosyl-L-homocysteine + 4 H(+). Specifically dimethylates two adjacent adenosines (A1518 and A1519) in the loop of a conserved hairpin near the 3'-end of 16S rRNA in the 30S particle. May play a critical role in biogenesis of 30S subunits. In Bacillus thuringiensis (strain Al Hakam), this protein is Ribosomal RNA small subunit methyltransferase A.